We begin with the raw amino-acid sequence, 376 residues long: Erythronate-4-phosphate dehydrogenase (376 aa).

Residues serine 45 and threonine 67 each coordinate substrate. NAD(+) is bound at residue aspartate 147. Arginine 209 is an active-site residue. Aspartate 233 contributes to the NAD(+) binding site. The active site involves glutamate 238. The Proton donor role is filled by histidine 255. NAD(+) is bound at residue glycine 258. Residue tyrosine 259 coordinates substrate.

It belongs to the D-isomer specific 2-hydroxyacid dehydrogenase family. PdxB subfamily. In terms of assembly, homodimer.

The protein localises to the cytoplasm. The enzyme catalyses 4-phospho-D-erythronate + NAD(+) = (R)-3-hydroxy-2-oxo-4-phosphooxybutanoate + NADH + H(+). The protein operates within cofactor biosynthesis; pyridoxine 5'-phosphate biosynthesis; pyridoxine 5'-phosphate from D-erythrose 4-phosphate: step 2/5. Catalyzes the oxidation of erythronate-4-phosphate to 3-hydroxy-2-oxo-4-phosphonooxybutanoate. This Shewanella baltica (strain OS155 / ATCC BAA-1091) protein is Erythronate-4-phosphate dehydrogenase.